The primary structure comprises 468 residues: MSQGKIVQIIGAVVDVEFPRNEVPKVYHALKVEGTEITLEVQQQLGDGVVRTIALGSTDGLKRNLLATNTERAISVPVGAGTLGRIMDVLGRPIDEAGDVQASDHWEIHRGAPSYEDQSSSTELLETGIKVIDLMCPFAKGGKVGLFGGAGVGKTVNMMELINNIAKAHSGLSVFAGVGERTREGNDFYHEMKDSNVLDKVAMVYGQMNEPPGNRLRVALTGLTMAEYFRDEKDANGKGKDVLLFVDNIYRYTLAGTEVSALLGRMPSAVGYQPTLAEEMGVLQERITSTKSGSITSIQAVYVPADDLTDPSPATTFAHLDSTVTLSRNIASLGIYPAVDPLDSTSRQMDPLVIGHEHYDTAQRVQQTLQKYKELKDIIAILGMDELSEEDKQSVSRARKIERFFSQPFHVAEVFTGSPGKYVSLKDTIRGFKAICDGEYDHLPEQAFYMVGSIEEAVEKANKMSAKA.

148 to 155 (GGAGVGKT) contributes to the ATP binding site.

Belongs to the ATPase alpha/beta chains family. As to quaternary structure, F-type ATPases have 2 components, CF(1) - the catalytic core - and CF(0) - the membrane proton channel. CF(1) has five subunits: alpha(3), beta(3), gamma(1), delta(1), epsilon(1). CF(0) has three main subunits: a(1), b(2) and c(9-12). The alpha and beta chains form an alternating ring which encloses part of the gamma chain. CF(1) is attached to CF(0) by a central stalk formed by the gamma and epsilon chains, while a peripheral stalk is formed by the delta and b chains.

It is found in the cell inner membrane. The enzyme catalyses ATP + H2O + 4 H(+)(in) = ADP + phosphate + 5 H(+)(out). Its function is as follows. Produces ATP from ADP in the presence of a proton gradient across the membrane. The catalytic sites are hosted primarily by the beta subunits. This chain is ATP synthase subunit beta, found in Xanthomonas oryzae pv. oryzae (strain KACC10331 / KXO85).